Consider the following 522-residue polypeptide: Cytochrome bd-I ubiquinol oxidase subunit 1 (522 aa).

At methionine 1 the chain carries N-formylmethionine. Residues 1–22 (MLDIVELSRLQFALTAMYHFLF) lie on the Cytoplasmic side of the membrane. Histidine 19 lines the heme b pocket. Residues 23–42 (VPLTLGMAFLLAIMETVYVL) form a helical membrane-spanning segment. The Periplasmic segment spans residues 43-94 (SGKQIYKDMTKFWGKLFGINFALGVATGLTMEFQFGTNWSYYSHYVGDIFGA). The chain crosses the membrane as a helical span at residues 95 to 114 (PLAIEGLMAFFLESTFVGLF). Residues 115 to 129 (FFGWDRLGKVQHMCV) lie on the Cytoplasmic side of the membrane. A helical membrane pass occupies residues 130-149 (TWLVALGSNLSALWILVANG). Residues 150-187 (WMQNPIASDFNFETMRMEMVSFSELVLNPVAQVKFVHT) are Periplasmic-facing. Histidine 186 serves as a coordination point for heme b. A helical transmembrane segment spans residues 188–207 (VASGYVTGAMFILGISAWYM). At 208-219 (LKGRDFAFAKRS) the chain is on the cytoplasmic side. A helical transmembrane segment spans residues 220–239 (FAIAASFGMAAVLSVIVLGD). Residues 240–392 (ESGYEMGDVQ…VAPLYFAFRI (153 aa)) lie on the Periplasmic side of the membrane. Residue methionine 393 coordinates heme b. A helical transmembrane segment spans residues 393–412 (MVACGFLLLAIIALSFWSVI). Residues 413-470 (RNRIGEKKWLLRAALYGIPLPWIAVEAGWFVAEYGRQPWAIGEVLPTAVANSSLTAGD) lie on the Cytoplasmic side of the membrane. A helical transmembrane segment spans residues 471 to 490 (LIFSMVLICGLYTLFLVAEL). Residues 491–522 (FLMFKFARLGPSSLKTGRYHFEQSSTTTQPAR) lie on the Periplasmic side of the membrane.

The protein belongs to the cytochrome ubiquinol oxidase subunit 1 family. Heterodimer of subunits I and II. Heme b is required as a cofactor. Heme d cis-diol serves as cofactor.

It localises to the cell inner membrane. The enzyme catalyses 2 a ubiquinol + O2(in) + 4 H(+)(in) = 2 a ubiquinone + 2 H2O(in) + 4 H(+)(out). The protein operates within energy metabolism; oxidative phosphorylation. A terminal oxidase that produces a proton motive force by the vectorial transfer of protons across the inner membrane. It is the component of the aerobic respiratory chain of E.coli that predominates when cells are grown at low aeration. Generates a proton motive force using protons and electrons from opposite sides of the membrane to generate H(2)O, transferring 1 proton/electron. In Escherichia coli O6:H1 (strain CFT073 / ATCC 700928 / UPEC), this protein is Cytochrome bd-I ubiquinol oxidase subunit 1 (cydA).